The sequence spans 1099 residues: Solute carrier family 12 member 1 (1099 aa).

Residues methionine 1–phenylalanine 177 lie on the Cytoplasmic side of the membrane. The short motif at arginine 20–valine 23 is the RFXV motif element. A phosphoserine mark is found at serine 60 and serine 90. Threonine 94, threonine 99, threonine 104, and threonine 117 each carry phosphothreonine. Position 119 is a phosphoserine (serine 119). A Phosphoserine; by AMPK modification is found at serine 129. Serine 147 bears the Phosphoserine mark. The disordered stretch occupies residues serine 147–aspartate 169. Residues glycine 159–aspartate 169 show a composition bias toward basic and acidic residues. A helical transmembrane segment spans residues glycine 178–isoleucine 198. Over arginine 199–serine 201 the chain is Extracellular. The chain crosses the membrane as a helical span at residues tryptophan 202–valine 222. Residues threonine 223–serine 259 are Cytoplasmic-facing. Residues isoleucine 260–alanine 280 traverse the membrane as a helical segment. Over glutamate 281–arginine 302 the chain is Extracellular. A helical transmembrane segment spans residues isoleucine 303–glutamate 323. Residues alanine 324–glutamine 327 lie on the Cytoplasmic side of the membrane. Residues valine 328–proline 348 traverse the membrane as a helical segment. The Extracellular portion of the chain corresponds to serine 349–glycine 379. Residues phenylalanine 380–isoleucine 400 form a helical membrane-spanning segment. The Cytoplasmic portion of the chain corresponds to serine 401–leucine 417. A helical transmembrane segment spans residues alanine 418–valine 438. Residues arginine 439–leucine 550 lie on the Extracellular side of the membrane. Residues asparagine 446 and asparagine 456 are each glycosylated (N-linked (GlcNAc...) asparagine). 2 helical membrane passes run threonine 551–isoleucine 571 and serine 572–alanine 592. Topologically, residues lysine 593–serine 609 are extracellular. Residues leucine 610–isoleucine 630 form a helical membrane-spanning segment. Topologically, residues threonine 631 to serine 1099 are cytoplasmic.

This sequence belongs to the SLC12A transporter family. In terms of assembly, when phosphorylated, interacts with PPP3CB. Phosphorylated at Ser-90, Thr-99 and Thr-104 by OXSR1/OSR1 and STK39/SPAK downstream of WNK kinases (WNK1, WNK2, WNK3 or WNK4), promoting its activity. Predominant in kidney. The 3 isoforms are differentially distributed within the kidney: B almost exclusively in cortex, F almost exclusively in medulla, and A about equally distributed.

It localises to the apical cell membrane. The enzyme catalyses K(+)(out) + 2 chloride(out) + Na(+)(out) = K(+)(in) + 2 chloride(in) + Na(+)(in). Activated following phosphorylation by OXSR1/OSR1 and STK39/SPAK downstream of WNK kinases (WNK1, WNK2, WNK3 or WNK4). Renal sodium, potassium and chloride ion cotransporter that mediates the transepithelial NaCl reabsorption in the thick ascending limb and plays an essential role in the urinary concentration and volume regulation. Electrically silent transporter system. The chain is Solute carrier family 12 member 1 (SLC12A1) from Oryctolagus cuniculus (Rabbit).